The following is a 193-amino-acid chain: Rho-related GTP-binding protein RhoA-C (193 aa).

Residues 12 to 19 (GDGACGKT), 30 to 37 (FPEVYVPT), 59 to 63 (DTAGQ), 117 to 120 (NKKD), and 160 to 162 (SAK) contribute to the GTP site. Tyr34 carries a (Microbial infection) O-linked (GlcNAc) tyrosine; by Yersinia Afp18 glycan. Position 190 is a cysteine methyl ester (Cys190). Cys190 carries the S-geranylgeranyl cysteine lipid modification. Residues 191–193 (LLL) constitute a propeptide, removed in mature form.

It belongs to the small GTPase superfamily. Rho family. In terms of processing, (Microbial infection) Glycosylated at Tyr-34 by Yersinia ruckeri toxin Afp18. Mono-O-GlcNAcylation by Afp18 inhibits RhoA activation by guanine nucleotide exchange factors and blocks RhoA signaling.

The protein resides in the cell membrane. In terms of biological role, regulates a signal transduction pathway linking plasma membrane receptors to the assembly of focal adhesions and actin stress fibers. This chain is Rho-related GTP-binding protein RhoA-C, found in Danio rerio (Zebrafish).